The following is a 492-amino-acid chain: N-succinylglutamate 5-semialdehyde dehydrogenase (492 aa).

Gly220–Gly225 serves as a coordination point for NAD(+). Residues Glu243 and Cys277 contribute to the active site.

Belongs to the aldehyde dehydrogenase family. AstD subfamily.

It carries out the reaction N-succinyl-L-glutamate 5-semialdehyde + NAD(+) + H2O = N-succinyl-L-glutamate + NADH + 2 H(+). It functions in the pathway amino-acid degradation; L-arginine degradation via AST pathway; L-glutamate and succinate from L-arginine: step 4/5. Catalyzes the NAD-dependent reduction of succinylglutamate semialdehyde into succinylglutamate. The polypeptide is N-succinylglutamate 5-semialdehyde dehydrogenase (Escherichia coli O7:K1 (strain IAI39 / ExPEC)).